Reading from the N-terminus, the 372-residue chain is DNA replication and repair protein RecF (372 aa).

An ATP-binding site is contributed by 30–37 (GDNGQGKT).

This sequence belongs to the RecF family.

The protein localises to the cytoplasm. Its function is as follows. The RecF protein is involved in DNA metabolism; it is required for DNA replication and normal SOS inducibility. RecF binds preferentially to single-stranded, linear DNA. It also seems to bind ATP. The chain is DNA replication and repair protein RecF from Ruminiclostridium cellulolyticum (strain ATCC 35319 / DSM 5812 / JCM 6584 / H10) (Clostridium cellulolyticum).